Consider the following 706-residue polypeptide: Glycine--tRNA ligase beta subunit (706 aa).

It belongs to the class-II aminoacyl-tRNA synthetase family. In terms of assembly, tetramer of two alpha and two beta subunits.

Its subcellular location is the cytoplasm. The catalysed reaction is tRNA(Gly) + glycine + ATP = glycyl-tRNA(Gly) + AMP + diphosphate. The protein is Glycine--tRNA ligase beta subunit of Acidobacterium capsulatum (strain ATCC 51196 / DSM 11244 / BCRC 80197 / JCM 7670 / NBRC 15755 / NCIMB 13165 / 161).